The following is a 468-amino-acid chain: Heat stress transcription factor A-1e (468 aa).

A DNA-binding region spans residues I21 to P115. The segment at A133–V199 is hydrophobic repeat HR-A/B. The span at Q211–S220 shows a compositional bias: polar residues. 2 disordered regions span residues Q211–L244 and Q268–T309. Residues N223–R227 carry the Nuclear localization signal motif. Over residues S277–S305 the composition is skewed to low complexity. The AHA motif lies at D402–E411. The Nuclear export signal signature appears at L454 to L461.

The protein belongs to the HSF family. Class A subfamily. Homotrimer. In terms of processing, exhibits temperature-dependent phosphorylation.

It localises to the cytoplasm. Its subcellular location is the nucleus. Its function is as follows. Transcriptional activator that specifically binds DNA sequence 5'-AGAAnnTTCT-3' known as heat shock promoter elements (HSE). This Arabidopsis thaliana (Mouse-ear cress) protein is Heat stress transcription factor A-1e (HSFA1E).